A 216-amino-acid polypeptide reads, in one-letter code: Phosphoserine phosphatase (216 aa).

The active-site Nucleophile is Asp-10. Residues Asp-10 and Asp-12 each contribute to the Mg(2+) site. Asp-12 (proton donor) is an active-site residue. Residues Glu-19, Arg-55, 98-99 (SG), and Lys-143 each bind substrate. Asp-166 contributes to the Mg(2+) binding site. Asn-169 provides a ligand contact to substrate.

The protein belongs to the HAD-like hydrolase superfamily. SerB family. Mg(2+) serves as cofactor.

It catalyses the reaction O-phospho-L-serine + H2O = L-serine + phosphate. The enzyme catalyses O-phospho-D-serine + H2O = D-serine + phosphate. Its pathway is amino-acid biosynthesis; L-serine biosynthesis; L-serine from 3-phospho-D-glycerate: step 3/3. The sequence is that of Phosphoserine phosphatase from Lactococcus lactis subsp. lactis (strain IL1403) (Streptococcus lactis).